A 289-amino-acid chain; its full sequence is Protease HtpX (289 aa).

2 consecutive transmembrane segments (helical) span residues 7-27 (LFLLTNLAITFVLGIVLNIIF) and 38-58 (GGILVMSLVFGFAGSLISLFM). His144 serves as a coordination point for Zn(2+). Residue Glu145 is part of the active site. Position 148 (His148) interacts with Zn(2+). 2 helical membrane-spanning segments follow: residues 155-175 (VTMTLLQGVLNTFVIFLSRII) and 194-214 (LVFWIVDIALQMIFGVIATMI). Glu223 lines the Zn(2+) pocket.

This sequence belongs to the peptidase M48B family. It depends on Zn(2+) as a cofactor.

The protein resides in the cell inner membrane. The polypeptide is Protease HtpX (Actinobacillus pleuropneumoniae serotype 5b (strain L20)).